The following is a 220-amino-acid chain: Claudin-3 (220 aa).

Residues 1-8 (MSMGLEIT) are Cytoplasmic-facing. Residues 9–29 (GTALAVLGWLGTIVCCALPMW) form a helical membrane-spanning segment. At 30–80 (RVSAFIGSNIITSQNIWEGLWMNCVVQSTGQMQCKVYDSLLALPQDLQAAR) the chain is on the extracellular side. A helical transmembrane segment spans residues 81 to 101 (ALIVVAILLAAFGLLVALVGA). The Cytoplasmic portion of the chain corresponds to 102–115 (QCTNCVQDDTAKAK). A helical transmembrane segment spans residues 116–136 (ITIVAGVLFLLAALLTLVPVS). The Extracellular portion of the chain corresponds to 137 to 159 (WSANTIIRDFYNPVVPEAQKREM). The helical transmembrane segment at 160 to 180 (GAGLYVGWAAAALQLLGGALL) threads the bilayer. The Cytoplasmic portion of the chain corresponds to 181–220 (CCSCPPREKKYTATKVVYSAPRSTGPGASLGTGYDRKDYV). At tyrosine 198 the chain carries Phosphotyrosine. 2 positions are modified to phosphoserine: serine 199 and serine 209. An interactions with TJP1, TJP2 and TJP3 region spans residues 219–220 (YV).

It belongs to the claudin family. Can form homo- and heteropolymers with other CLDN. Homopolymers interact with CLDN1 and CLDN2 homopolymers. Interacts in cis (within the same plasma membrane) with CLDN19. Directly interacts with TJP1/ZO-1, TJP2/ZO-2 and TJP3/ZO-3.

The protein resides in the cell junction. It localises to the tight junction. The protein localises to the cell membrane. Barrier-forming claudin. Plays a major role in tight junction-specific obliteration of the intercellular space, through calcium-independent cell-adhesion activity. The protein is Claudin-3 (CLDN3) of Homo sapiens (Human).